The sequence spans 435 residues: MMDEPWWEGRVASDVHCTLREKELKLPTFRAHSPLLKSRRFFVDILTLLSSHCQLCPAARHLAVYLLDHFMDRYNVTTSKQLYTVAVSCLLLANGVSLLSPRLKCSGMISAHCNLHLPGSSNSPASAPHPPPTPPQVAETTGKFEDREDHVPKLEQINSTRILSSQNFTLTKKELLSTELLLLEAFSWNLCLPTPAHFLDYYLLASVSQKDHHCHTWPTTCPRKTKECLKEYAHYFLEVTLQDHIFYKFQPSVVAAACVGASRICLQLSPYWTRDLQRISSYSLEHLSTCIEILLVVYDNVLKDAVAVKSQALAMVPGTPPTPTQVLFQPPAYPALGQPATTLAQFQTPVQDLCLAYRDSLQAHRSGSLLSGSTGSSLHTPYQPLQPLDMCPVPVPASLSMHMAIAAEPRHCLATTYGSSYFSGSHMFPTGCFDR.

Residues 14-191 enclose the Cyclin N-terminal domain; sequence DVHCTLREKE…LLEAFSWNLC (178 aa). Positions 120–142 are disordered; sequence SSNSPASAPHPPPTPPQVAETTG.

It belongs to the cyclin family. Cyclin J subfamily.

In Homo sapiens (Human), this protein is Cyclin-J-like protein (CCNJL).